A 93-amino-acid chain; its full sequence is Small ribosomal subunit protein uS19 (93 aa).

It belongs to the universal ribosomal protein uS19 family.

Protein S19 forms a complex with S13 that binds strongly to the 16S ribosomal RNA. The polypeptide is Small ribosomal subunit protein uS19 (Pediococcus pentosaceus (strain ATCC 25745 / CCUG 21536 / LMG 10740 / 183-1w)).